We begin with the raw amino-acid sequence, 445 residues long: Acyl-CoA Delta-4 desaturase (445 aa).

The Cytochrome b5 heme-binding domain occupies 19 to 96; sequence AGVYTWEEVQ…MKPLLVGELA (78 aa). The next 4 membrane-spanning stretches (helical) occupy residues 132–152, 153–173, 266–286, and 307–327; these read LFFL…LLMV, WHWG…ATAQ, YFFL…NIMM, and YMLC…MMFA.

It belongs to the fatty acid desaturase type 1 family.

The protein resides in the membrane. The enzyme catalyses (8Z,11Z,14Z,17Z)-eicosatetraenoyl-CoA + 2 Fe(II)-[cytochrome b5] + O2 + 2 H(+) = (5Z,8Z,11Z,14Z,17Z)-eicosapentaenoyl-CoA + 2 Fe(III)-[cytochrome b5] + 2 H2O. It catalyses the reaction (7Z,10Z,13Z,16Z)-docosatetraenoyl-CoA + 2 Fe(II)-[cytochrome b5] + O2 + 2 H(+) = (4Z,7Z,10Z,13Z,16Z)-docosapentaenoyl-CoA + 2 Fe(III)-[cytochrome b5] + 2 H2O. It carries out the reaction (7Z,10Z,13Z,16Z,19Z)-docosapentaenoyl-CoA + 2 Fe(II)-[cytochrome b5] + O2 + 2 H(+) = (4Z,7Z,10Z,13Z,16Z,19Z)-docosahexaenoyl-CoA + 2 Fe(III)-[cytochrome b5] + 2 H2O. The protein operates within lipid metabolism; polyunsaturated fatty acid biosynthesis. Functionally, fatty acid desaturase with bifunctional delta-4 and delta-5 activities. Component of a lipid metabolic pathway that catalyzes the biosynthesis of polyunsaturated fatty acids (PUFA) with preference toward n-3 substrates and Delta(4)function. This is Acyl-CoA Delta-4 desaturase from Siganus canaliculatus (White-spotted spinefoot).